A 487-amino-acid chain; its full sequence is N-succinylglutamate 5-semialdehyde dehydrogenase (487 aa).

NAD(+) is bound at residue 221-226; it reads GSSDTG. Active-site residues include Glu244 and Cys278.

This sequence belongs to the aldehyde dehydrogenase family. AstD subfamily.

The catalysed reaction is N-succinyl-L-glutamate 5-semialdehyde + NAD(+) + H2O = N-succinyl-L-glutamate + NADH + 2 H(+). The protein operates within amino-acid degradation; L-arginine degradation via AST pathway; L-glutamate and succinate from L-arginine: step 4/5. Functionally, catalyzes the NAD-dependent reduction of succinylglutamate semialdehyde into succinylglutamate. In Burkholderia multivorans (strain ATCC 17616 / 249), this protein is N-succinylglutamate 5-semialdehyde dehydrogenase.